The chain runs to 61 residues: Outer membrane lipoprotein YnbE (61 aa).

The first 16 residues, M1 to G16, serve as a signal peptide directing secretion. A lipid anchor (N-palmitoyl cysteine) is attached at C17. C17 carries the S-diacylglycerol cysteine lipid modification.

The protein belongs to the lipoprotein YnbE family. Interacts with the C-terminal region of the probable phospholipid transport protein YdbH.

The protein resides in the cell outer membrane. Its function is as follows. Involved in outer membrane lipid homeostasis. Interacts with the inner membrane protein YdbH to form a functional protein bridge connecting the inner and outer membranes of the cell. Is required for YdbH's function and may facilitate phospholipid transport through the periplasm. The chain is Outer membrane lipoprotein YnbE (ynbE) from Escherichia coli O6:H1 (strain CFT073 / ATCC 700928 / UPEC).